Reading from the N-terminus, the 431-residue chain is Serine hydroxymethyltransferase (431 aa).

Residues leucine 127 and 131–133 each bind (6S)-5,6,7,8-tetrahydrofolate; that span reads GHL. Lysine 236 carries the N6-(pyridoxal phosphate)lysine modification.

The protein belongs to the SHMT family. As to quaternary structure, homodimer. Requires pyridoxal 5'-phosphate as cofactor.

The protein localises to the cytoplasm. The catalysed reaction is (6R)-5,10-methylene-5,6,7,8-tetrahydrofolate + glycine + H2O = (6S)-5,6,7,8-tetrahydrofolate + L-serine. The protein operates within one-carbon metabolism; tetrahydrofolate interconversion. It participates in amino-acid biosynthesis; glycine biosynthesis; glycine from L-serine: step 1/1. Functionally, catalyzes the reversible interconversion of serine and glycine with tetrahydrofolate (THF) serving as the one-carbon carrier. This reaction serves as the major source of one-carbon groups required for the biosynthesis of purines, thymidylate, methionine, and other important biomolecules. Also exhibits THF-independent aldolase activity toward beta-hydroxyamino acids, producing glycine and aldehydes, via a retro-aldol mechanism. This Granulibacter bethesdensis (strain ATCC BAA-1260 / CGDNIH1) protein is Serine hydroxymethyltransferase.